The chain runs to 528 residues: Phosphoenolpyruvate carboxykinase (ATP) (528 aa).

Substrate is bound by residues Arg-54, Tyr-190, and Lys-196. Residues Lys-196, His-215, and 231–239 contribute to the ATP site; that span reads GLSGTGKTT. Lys-196 and His-215 together coordinate Mn(2+). Asp-252 serves as a coordination point for Mn(2+). Positions 280, 316, and 441 each coordinate ATP. Arg-316 is a substrate binding site.

It belongs to the phosphoenolpyruvate carboxykinase (ATP) family. Requires Mn(2+) as cofactor.

The protein resides in the cytoplasm. The enzyme catalyses oxaloacetate + ATP = phosphoenolpyruvate + ADP + CO2. The protein operates within carbohydrate biosynthesis; gluconeogenesis. In terms of biological role, involved in the gluconeogenesis. Catalyzes the conversion of oxaloacetate (OAA) to phosphoenolpyruvate (PEP) through direct phosphoryl transfer between the nucleoside triphosphate and OAA. The polypeptide is Phosphoenolpyruvate carboxykinase (ATP) (Sulfurimonas denitrificans (strain ATCC 33889 / DSM 1251) (Thiomicrospira denitrificans (strain ATCC 33889 / DSM 1251))).